The chain runs to 1034 residues: Tubulin glycylase 3D (1034 aa).

Polar residues-rich tracts occupy residues 1–13 and 131–146; these read MINSHHTSQQTLN and QVNSVLADNSNIQNDF. Disordered stretches follow at residues 1–21, 131–166, and 189–208; these read MINSHHTSQQTLNKESKSQMD, QVNSVLADNSNIQNDFYPQYRKPKNPTTKKRQSTDY, and LNQQNQQQQDLAKNRVDNSQ. The span at 151–161 shows a compositional bias: basic residues; it reads RKPKNPTTKKR. Residues 189-199 show a composition bias toward low complexity; it reads LNQQNQQQQDL. A TTL domain is found at 571–930; the sequence is DINNVIDDEK…YGMAQKSGIK (360 aa). Residues 741 to 744, lysine 754, and aspartate 756 contribute to the ATP site; that span reads QKYI. The tract at residues 1002-1034 is disordered; it reads HDQKQFSSQQANNIETYSRPQTAKSQTQSSKKL.

The protein localises to the cytoplasm. Functionally, probable glycylase which modifies tubulin, generating side chains of glycine on the gamma-carboxyl groups of specific glutamate residues within the C-terminal tail of tubulin. This Tetrahymena thermophila (strain SB210) protein is Tubulin glycylase 3D (TTLL3D).